A 451-amino-acid polypeptide reads, in one-letter code: METNQILETIRMIEEEKLDIRTITMGISLLDCMDGDGEVARKKIYQKIVTKARNLVAVGEAIESEFGIPIINKRISVTPIAIIAGSSADTDYVEFAKTLDAAAKEVGVNFIGGYSALVQKGYTKGDEILIRSIPQALAQTERVCSSVNVGSTRTGINMDAVRQMGEVIKETADLTADTQGLGCAKLVVFANAVEDNPFMAGAFHGVGEADCVINVGVSGPGVVKRAIEKVKGEPFDIVAETVKQTAFKITRMGQLVGQVASEKLGVPFGIVDLSLAPTPAIGDSVAHILEEMGLEMVGTHGTTAALALLNDAVKKGGVMACGHVGGLSGAFIPVSEDAGMIEAVQQGALNLEKLEAMTAICSVGLDMIAVPGDTTAETLAAMIADEAAIGVINNKTTAVRVIPASGTKVGDMVEFGGLLGTAPVMPVNGKSSVDFIARGGRIPAPIHSFKN.

This sequence belongs to the UPF0210 family. As to quaternary structure, homodimer.

This Listeria monocytogenes serotype 4b (strain F2365) protein is UPF0210 protein LMOf2365_0563.